The primary structure comprises 109 residues: Nucleoid-associated protein Caul_4574 (109 aa).

Belongs to the YbaB/EbfC family. As to quaternary structure, homodimer.

It localises to the cytoplasm. It is found in the nucleoid. In terms of biological role, binds to DNA and alters its conformation. May be involved in regulation of gene expression, nucleoid organization and DNA protection. This is Nucleoid-associated protein Caul_4574 from Caulobacter sp. (strain K31).